The sequence spans 96 residues: Protein Vpr (96 aa).

Residues 1–42 (MEQAPADQGPQREPYNEWALELLEELKSEAVRHFPRIWLHSL) are homooligomerization. Ser79, Ser94, and Ser96 each carry phosphoserine; by host.

It belongs to the HIV-1 VPR protein family. In terms of assembly, homooligomer, may form homodimer. Interacts with p6-gag region of the Pr55 Gag precursor protein through a (Leu-X-X)4 motif near the C-terminus of the P6gag protein. Interacts with host UNG. May interact with host RAD23A/HHR23A. Interacts with host VPRBP/DCAF1, leading to hijack the CUL4A-RBX1-DDB1-DCAF1/VPRBP complex, mediating ubiquitination of host proteins such as TERT and ZGPAT and arrest of the cell cycle in G2 phase. In terms of processing, phosphorylated on several residues by host. These phosphorylations regulate VPR activity for the nuclear import of the HIV-1 pre-integration complex.

The protein resides in the virion. It localises to the host nucleus. The protein localises to the host extracellular space. During virus replication, may deplete host UNG protein, and incude G2-M cell cycle arrest. Acts by targeting specific host proteins for degradation by the 26S proteasome, through association with the cellular CUL4A-DDB1 E3 ligase complex by direct interaction with host VPRPB/DCAF-1. Cell cycle arrest reportedly occurs within hours of infection and is not blocked by antiviral agents, suggesting that it is initiated by the VPR carried into the virion. Additionally, VPR induces apoptosis in a cell cycle dependent manner suggesting that these two effects are mechanistically linked. Detected in the serum and cerebrospinal fluid of AIDS patient, VPR may also induce cell death to bystander cells. Its function is as follows. During virus entry, plays a role in the transport of the viral pre-integration (PIC) complex to the host nucleus. This function is crucial for viral infection of non-dividing macrophages. May act directly at the nuclear pore complex, by binding nucleoporins phenylalanine-glycine (FG)-repeat regions. In Human immunodeficiency virus type 1 group M subtype D (isolate ELI) (HIV-1), this protein is Protein Vpr.